The following is a 166-amino-acid chain: Small ribosomal subunit protein uS5 (166 aa).

Positions L11 to V74 constitute an S5 DRBM domain.

The protein belongs to the universal ribosomal protein uS5 family. Part of the 30S ribosomal subunit. Contacts proteins S4 and S8.

Its function is as follows. With S4 and S12 plays an important role in translational accuracy. Located at the back of the 30S subunit body where it stabilizes the conformation of the head with respect to the body. This is Small ribosomal subunit protein uS5 from Pasteurella multocida (strain Pm70).